The following is a 63-amino-acid chain: MKFVEIKDLSVAELKKKRAALSEELFQARIKNSIGQLSNPVQIRGLRRDIAKINTAIVKKVAR.

The protein belongs to the universal ribosomal protein uL29 family.

The chain is Large ribosomal subunit protein uL29 from Bdellovibrio bacteriovorus (strain ATCC 15356 / DSM 50701 / NCIMB 9529 / HD100).